An 832-amino-acid chain; its full sequence is Leucine--tRNA ligase (832 aa).

The 'HIGH' region motif lies at 58 to 68; sequence PYPSGDLHMGH. The 'KMSKS' region signature appears at 598 to 602; sequence AMSKS. Lys-601 serves as a coordination point for ATP.

Belongs to the class-I aminoacyl-tRNA synthetase family.

It is found in the cytoplasm. The catalysed reaction is tRNA(Leu) + L-leucine + ATP = L-leucyl-tRNA(Leu) + AMP + diphosphate. This is Leucine--tRNA ligase from Acidothermus cellulolyticus (strain ATCC 43068 / DSM 8971 / 11B).